A 201-amino-acid chain; its full sequence is Potassium-transporting ATPase KdpC subunit (201 aa).

Residues 12–34 (LLALTMITGLAYPLAVTGLATVL) form a helical membrane-spanning segment. Residues 73 to 102 (TVAPDPADSSKTVSAPYNAANSGGSNLGPT) are disordered. Residues 81–101 (SSKTVSAPYNAANSGGSNLGP) show a composition bias toward polar residues.

It belongs to the KdpC family. The system is composed of three essential subunits: KdpA, KdpB and KdpC.

It is found in the cell inner membrane. Its function is as follows. Part of the high-affinity ATP-driven potassium transport (or Kdp) system, which catalyzes the hydrolysis of ATP coupled with the electrogenic transport of potassium into the cytoplasm. This subunit acts as a catalytic chaperone that increases the ATP-binding affinity of the ATP-hydrolyzing subunit KdpB by the formation of a transient KdpB/KdpC/ATP ternary complex. The sequence is that of Potassium-transporting ATPase KdpC subunit from Rhodopseudomonas palustris (strain ATCC BAA-98 / CGA009).